Reading from the N-terminus, the 328-residue chain is Transcription initiation factor TFIID subunit 8 (328 aa).

The Histone-fold domain maps to 16–83; it reads RRILNKVVSQ…DVSLALINMG (68 aa). The disordered stretch occupies residues 229–309; the sequence is NRTEDEPSKD…PGTMPSRSLA (81 aa). 3 positions are modified to phosphoserine: Ser236, Ser245, and Ser255. Residues 239-251 show a composition bias toward acidic residues; it reads DGEEGDSENEEMD. The segment covering 252–264 has biased composition (basic and acidic residues); the sequence is GDKSKEEKPELDI. Positions 296-309 are enriched in polar residues; that stretch reads NCPTPGTMPSRSLA.

The protein belongs to the TAF8 family. Belongs to the TFIID complex which is composed of TATA binding protein (Tbp) and a number of TBP-associated factors (TAFs). Histone fold interacts with N-terminus of Taf10b.

Its subcellular location is the nucleus. Its function is as follows. TFIID is a multimeric protein complex that plays a central role in mediating promoter responses to various activators and repressors. The polypeptide is Transcription initiation factor TFIID subunit 8 (Drosophila melanogaster (Fruit fly)).